Reading from the N-terminus, the 283-residue chain is Cytosolic Fe-S cluster assembly factor CFD1 (283 aa).

G26–S33 contributes to the ATP binding site. Positions 202 and 205 each coordinate [4Fe-4S] cluster.

This sequence belongs to the Mrp/NBP35 ATP-binding proteins family. NUBP2/CFD1 subfamily. Heterotetramer of 2 NBP35 and 2 CFD1 chains. Requires [4Fe-4S] cluster as cofactor.

The protein resides in the cytoplasm. Functionally, component of the cytosolic iron-sulfur (Fe/S) protein assembly (CIA) machinery. Required for maturation of extramitochondrial Fe-S proteins. The NBP35-CFD1 heterotetramer forms a Fe-S scaffold complex, mediating the de novo assembly of an Fe-S cluster and its transfer to target apoproteins. Required for biogenesis and export of both ribosomal subunits, which may reflect a role in assembly of the Fe/S clusters in RLI1, a protein which performs rRNA processing and ribosome export. The chain is Cytosolic Fe-S cluster assembly factor CFD1 from Kluyveromyces lactis (strain ATCC 8585 / CBS 2359 / DSM 70799 / NBRC 1267 / NRRL Y-1140 / WM37) (Yeast).